The sequence spans 611 residues: MGVPSPTPLSSLLLLLLILGTRCYARQVHVPRGPLYRVAGTAVSISCNVSDYEGPAQQDFEWFMYRPEAPATSLGIVSTKDSQFSYAVFGPRVASGDLQVQRLKGDSVVLKIARLQAQDSGFYECYTPSTDTQYLGNYSAKVELRVLPDELQVSAAPPGPRGRQAATSPSRLTVHEGQELALGCLAQTKTKKHTHLSVSFGRAIPEAPVGRATLQEVVGLRSDMAVEAGAPYAERLASGELRLSKEGTDRYRMVVGGAQAGDSGTYHCTAAEWIQDPDGSWVQVAEKRAVLAHVDVQTLSSQLAVTVGPGERRIGPGEPLELLCNVSGALPPPGRHAAYSVGWEMAPAGAPGPGRLVAQLDTEGIGSLGPGYEDRHIAMEKVASRTYRLRLEAARPADAGTYRCLAKAYVRGSGTRLREAASARSRPLPVHVREEGVVLEAVAWLAGGTVYRGETASLLCNISVRGGPPGLRLAASWWVERPEEGELSSGPAQLVGGVGQDGVAELGVRPGGGPVSVELVGPRSHRLRLHGLGPEDEGIYHCAPSAWVQHADYSWYQAGSARSGPVTVYPYTHAVDTLFVPLLVGTGVALVTGASVLATITCCFMKRMRKR.

Residues Met1–Ala25 form the signal peptide. Ig-like C2-type domains lie at Arg26 to Glu143, Pro160 to Val284, Ser301 to Ser422, and Pro429 to Ser554. Residues Arg26 to Thr577 are Extracellular-facing. A disulfide bond links Cys47 and Cys125. Residues Asn48 and Asn137 are each glycosylated (N-linked (GlcNAc...) asparagine). Cys184 and Cys268 form a disulfide bridge. The EWI motif signature appears at Glu272–Ile274. Disulfide bonds link Cys324–Cys404 and Cys460–Cys542. Asn325 is a glycosylation site (N-linked (GlcNAc...) asparagine). Residue Ser516 is modified to Phosphoserine. A helical transmembrane segment spans residues Leu578–Ala598. The Cytoplasmic segment spans residues Thr599 to Arg611. 2 S-palmitoyl cysteine lipidation sites follow: Cys602 and Cys603.

In terms of assembly, interacts directly with CD82 and CD9/tetraspanin-29. Also interacts with integrin alpha-3/beta-1 and integrin alpha-4/beta-1. Part of a complex composed of CD9, PTGFRN and CD81. Interacts with CD81/tetraspanin-28. As to expression, expressed in lymphocytes as well as in many tissues with higher expression in brain. Detected in all regions of the brain with weak expression in the pituitary. Expressed selectively by neurons but not by glial cells. Expressed in myoblasts (at protein level).

Its subcellular location is the cell membrane. Functionally, member of the immunoglobulin superfamily (IgSF) that links tetraspanin-enriched microdomains to the actin cytoskeleton and plays several important roles in innate and adaptive immunity. Acts as an inducible receptor of HSPA8 on dendritic cells to enhance the CCL21/SLC-dependent migration of activated mature dendritic cells while attenuating their antigen-specific stimulatory capacities. In complex with alpha-actinins ACTN1 and ACTN4, regulates actin dynamics in the immune synapse and subsequent T-cell activation. Inhibits the entry of several viruses such as hepatitis C Virus (HCV) or HIV-1. Mechanistically, promotes a change in CD81 organization at the plasma membrane by significantly restricting its diffusion which in turn influences CD81 interaction with Claudin-1/CLDN1, preventing CLDN1 from acting as a co-receptor required for HCV entry. Accumulates at the presynaptic terminal, the producer cell side of the virological synapse, to prevent HIV-1 Env-mediated cell-cell fusion. Highly expressed on malignant cells with antigen presentation defects, interacts with NK receptor KLRA9 to suppress NK-cell cytotoxicity. May participate in the regulation of neurite outgrowth and maintenance of the neural network in the adult brain. This chain is Immunoglobulin superfamily member 8 (Igsf8), found in Mus musculus (Mouse).